A 221-amino-acid polypeptide reads, in one-letter code: Ribosomal RNA small subunit methyltransferase Nep1 (221 aa).

S-adenosyl-L-methionine-binding positions include Gly-174, Gly-179, and 196–201 (LGEVAM).

It belongs to the class IV-like SAM-binding methyltransferase superfamily. RNA methyltransferase NEP1 family. In terms of assembly, homodimer.

The enzyme catalyses a pseudouridine in rRNA + S-adenosyl-L-methionine = an N(1)-methylpseudouridine in rRNA + S-adenosyl-L-homocysteine + H(+). Methyltransferase involved in ribosomal biogenesis. Specifically catalyzes the N1-methylation of the pseudouridine corresponding to position 914 in M.jannaschii 16S rRNA. This Pyrobaculum arsenaticum (strain DSM 13514 / JCM 11321 / PZ6) protein is Ribosomal RNA small subunit methyltransferase Nep1.